We begin with the raw amino-acid sequence, 485 residues long: MKQNFFAVDLGATSGRTILGSFIEGGLNLEEINRFPNHLIEVGGHFYWDIYALYRHIIDGLKLVAHRGESIASIGIDTWGVDFVLLGKDGNLLRQPYAYRDPHTVGAPEAFFSRISRSEVYGKTGIQVMNFNSLFQLDTLRRNHDSALEAADKVLFMPDALSYMLTGKMVTEYTIASTAQLVNAHTQRLEPELLKAVGLQEENFGRFVFPGEKIGTLTEEVQKITGLGAIPVIAVAGHDTGSAVAAVPALDRNFAYLSSGTWSLMGVETDAPVITAETEALNFTNEGGVEGTIRLLKNICGMWLLERCRLNWGDTSYPELITEADSCEPFRSLINPDDDCFANPADMEQAIREYCRTTGQPVPEQRGQIVRCIFESLALRYRQVLENLRALSPRPIETLHVIGGGSRNDLLNQFTANAIGIPVVAGPSEATAIGNVMIQAMTVGEATDVAGMRQLISRSIPLKTYHPQDMAAWDAAYIHFKNCVR.

12-16 (ATSGR) serves as a coordination point for ATP. Substrate-binding positions include Gly80 and 238–240 (HDT). Asp239 acts as the Proton acceptor in catalysis. Thr261 is a binding site for ATP. Asn298 is a binding site for substrate. Glu306 contributes to the ATP binding site. Cys355 and Cys372 form a disulfide bridge. Gly404 lines the ATP pocket.

The protein belongs to the rhamnulokinase family. Mg(2+) is required as a cofactor.

The enzyme catalyses L-rhamnulose + ATP = L-rhamnulose 1-phosphate + ADP + H(+). It participates in carbohydrate degradation; L-rhamnose degradation; glycerone phosphate from L-rhamnose: step 2/3. Involved in the catabolism of L-rhamnose (6-deoxy-L-mannose). Catalyzes the transfer of the gamma-phosphate group from ATP to the 1-hydroxyl group of L-rhamnulose to yield L-rhamnulose 1-phosphate. The protein is Rhamnulokinase of Bacteroides thetaiotaomicron (strain ATCC 29148 / DSM 2079 / JCM 5827 / CCUG 10774 / NCTC 10582 / VPI-5482 / E50).